The primary structure comprises 221 residues: Transcriptional regulator GfcR (221 aa).

A disordered region spans residues 35-59 (ASWLVERSQPTDNSQSSSANNPTEA). The span at 42–57 (SQPTDNSQSSSANNPT) shows a compositional bias: polar residues.

Belongs to the purine/pyrimidine phosphoribosyltransferase family. GfcR subfamily.

DNA-binding transcriptional regulator that functions as a regulator of central sugar catabolic pathways. The protein is Transcriptional regulator GfcR of Haloquadratum walsbyi (strain DSM 16790 / HBSQ001).